The following is a 90-amino-acid chain: Cell division topological specificity factor (90 aa).

It belongs to the MinE family.

Prevents the cell division inhibition by proteins MinC and MinD at internal division sites while permitting inhibition at polar sites. This ensures cell division at the proper site by restricting the formation of a division septum at the midpoint of the long axis of the cell. The chain is Cell division topological specificity factor from Francisella tularensis subsp. tularensis (strain FSC 198).